The following is a 500-amino-acid chain: Probable malate:quinone oxidoreductase (500 aa).

Belongs to the MQO family. The cofactor is FAD.

It carries out the reaction (S)-malate + a quinone = a quinol + oxaloacetate. Its pathway is carbohydrate metabolism; tricarboxylic acid cycle; oxaloacetate from (S)-malate (quinone route): step 1/1. This is Probable malate:quinone oxidoreductase from Corynebacterium aurimucosum (strain ATCC 700975 / DSM 44827 / CIP 107346 / CN-1) (Corynebacterium nigricans).